An 86-amino-acid polypeptide reads, in one-letter code: Small ribosomal subunit protein bS20 (86 aa).

A compositionally biased stretch (basic residues) spans 1–27; that stretch reads MANSKSAKKRATQAERRRQHNASRRSM. A disordered region spans residues 1–28; that stretch reads MANSKSAKKRATQAERRRQHNASRRSMM.

This sequence belongs to the bacterial ribosomal protein bS20 family.

Its function is as follows. Binds directly to 16S ribosomal RNA. The polypeptide is Small ribosomal subunit protein bS20 (Aliivibrio fischeri (strain MJ11) (Vibrio fischeri)).